An 827-amino-acid chain; its full sequence is Periplasmic nitrate reductase (827 aa).

The segment at residues 1-34 (MSLTRRDFIKANAVPATAAAAGLATPAIAQPAKA) is a signal peptide (tat-type signal). One can recognise a 4Fe-4S Mo/W bis-MGD-type domain in the interval 36-92 (IRWDKGVCRFCGTGCSVLVGVQDGRVVATQGDPDSPVNRGLNCIKGYFLSKIMYGED). Cys-43, Cys-46, Cys-50, and Cys-78 together coordinate [4Fe-4S] cluster. Residues Lys-80, Gln-148, Asn-173, Cys-177, 210 to 217 (WGSNMAEM), 241 to 245 (STFEH), 260 to 262 (QTD), Met-371, Gln-375, Asn-481, 507 to 508 (SD), Lys-530, Asp-557, and 717 to 726 (TGRVLEHWHS) each bind Mo-bis(molybdopterin guanine dinucleotide). Phe-793 is a substrate binding site. The Mo-bis(molybdopterin guanine dinucleotide) site is built by Asn-801 and Lys-818.

It belongs to the prokaryotic molybdopterin-containing oxidoreductase family. NasA/NapA/NarB subfamily. As to quaternary structure, component of the periplasmic nitrate reductase NapAB complex composed of NapA and NapB. It depends on [4Fe-4S] cluster as a cofactor. The cofactor is Mo-bis(molybdopterin guanine dinucleotide). Post-translationally, predicted to be exported by the Tat system. The position of the signal peptide cleavage has not been experimentally proven.

It localises to the periplasm. It catalyses the reaction 2 Fe(II)-[cytochrome] + nitrate + 2 H(+) = 2 Fe(III)-[cytochrome] + nitrite + H2O. Functionally, catalytic subunit of the periplasmic nitrate reductase complex NapAB. Receives electrons from NapB and catalyzes the reduction of nitrate to nitrite. The polypeptide is Periplasmic nitrate reductase (Paramagnetospirillum magnetotacticum (Aquaspirillum magnetotacticum)).